The primary structure comprises 576 residues: DNA mismatch repair protein MutL (576 aa).

It belongs to the DNA mismatch repair MutL/HexB family.

Its function is as follows. This protein is involved in the repair of mismatches in DNA. It is required for dam-dependent methyl-directed DNA mismatch repair. May act as a 'molecular matchmaker', a protein that promotes the formation of a stable complex between two or more DNA-binding proteins in an ATP-dependent manner without itself being part of a final effector complex. The polypeptide is DNA mismatch repair protein MutL (Chlamydia trachomatis serovar A (strain ATCC VR-571B / DSM 19440 / HAR-13)).